A 101-amino-acid chain; its full sequence is Small ribosomal subunit protein uS14 (101 aa).

It belongs to the universal ribosomal protein uS14 family. As to quaternary structure, part of the 30S ribosomal subunit. Contacts proteins S3 and S10.

Functionally, binds 16S rRNA, required for the assembly of 30S particles and may also be responsible for determining the conformation of the 16S rRNA at the A site. This chain is Small ribosomal subunit protein uS14, found in Ehrlichia chaffeensis (strain ATCC CRL-10679 / Arkansas).